The following is a 114-amino-acid chain: Snake venom vascular endothelial growth factor (114 aa).

Glutamine 1 bears the Pyrrolidone carboxylic acid mark. Disulfide bonds link cysteine 14/cysteine 56, cysteine 45/cysteine 91, and cysteine 49/cysteine 93. The segment at 92-114 is disordered; sequence ECRPGSTVNNGKRKKNPKEGEPR.

It belongs to the PDGF/VEGF growth factor family. Snake venom VEGF subfamily. Homodimer; disulfide-linked. Interacts with human VEGF receptor 1/FLT1. Interacts with human VEGF receptor 2/KDR. As to expression, expressed by venom gland.

It is found in the secreted. In terms of biological role, snake venom vascular endothelial growth factor (svVEGF) that may contribute to venom dispersion and prey subjugation by inducing vascular permeability and hypotension. Induces an increase in capillary permeability after intradermal injection, as well as a drastic hypotensive effect after intravenous injection. The hypotension is mediated by nitric oxide (NO), which is produced by VEGF-activated endothelium NO synthase. Induces angiogenesis and migration of human vascular endothelial cells in vitro. Exhibits angiogenic activity by inducing human umbilical vein endothelial cells (HUVEC) to develop vessels in vitro. Induces cellular migration of HUVEC cells towards a wound in scratch assays, enhancing wound closure after 12 h by 49.5%. Induces dose-dependent leukocyte recruitment to the peritoneal cavity leading to increased vascular permeability in mice. The sequence is that of Snake venom vascular endothelial growth factor from Crotalus durissus terrificus (South American rattlesnake).